We begin with the raw amino-acid sequence, 354 residues long: MRIDHIRQRLRASGAKPCHEQRVLRAWTHALPLDRGRCRSEDFFPAPLGARLPALGAELAALAQVRSEHAGEDGARLLVELADGQTVESVLLPRDGLCVSTQVGCAVGCAFCMTGRDGLLRQLGSAEIVAQVVLARSRRAVRKVVFMGMGEPAHNLDNVLEAIALLGTEGGIGHKNLVFSTVGDRRVFERLPQGSVKPALALSLHTTRPALRTKLMPRAPRLDPAELVELGETYARATGYPIQYQWTLLAGVNDDDEELDGIVRLLAGKYAVMNFIPYNSVAGAGFARPSWEHAAAMARYLHRRGILTKLRHSAGQDVDGGCGQLRARVIASGALGQPAEAAPDRVVLVRRGQA.

Residue E88 is the Proton acceptor of the active site. The 227-residue stretch at L91 to D317 folds into the Radical SAM core domain. Residues C98 and C322 are joined by a disulfide bond. 3 residues coordinate [4Fe-4S] cluster: C105, C109, and C112. Residues G150–E151, S180, S203–H205, and N279 each bind S-adenosyl-L-methionine. The S-methylcysteine intermediate role is filled by C322.

It belongs to the radical SAM superfamily. RlmN family. Requires [4Fe-4S] cluster as cofactor.

The protein localises to the cytoplasm. The chain is Probable RNA methyltransferase AZOSEA28700 from Aromatoleum aromaticum (strain DSM 19018 / LMG 30748 / EbN1) (Azoarcus sp. (strain EbN1)).